The following is a 242-amino-acid chain: Caspase-14 (242 aa).

The propeptide occupies 1–5 (MSNPR). Catalysis depends on residues His-89 and Cys-132. Positions 147–152 (EIVMVI) are excised as a propeptide.

This sequence belongs to the peptidase C14A family. As to quaternary structure, heterodimer of a large and a small subunit, both processed from the precursor; the mature active form is a p17/p10 dimer and the intermediate form a p20/p8 dimer. In terms of processing, maturation by proteolytic processing appears to be a two-step process. The precursor is processed by KLK7 to yield the p20/p8 intermediate form which acts on the precursor to yield the p17/p10 mature form. Initially, cleavage between Ile-152 and Lys-153 has been proposed to yield the large and small subunits of the active enzyme. As to expression, expressed in keratinocytes of adult skin suprabasal layers (from spinous layers to the stratum granulosum and stratum corneum) (at protein level). Expressed in keratinocytes of hair shaft and sebaceous glands (at protein level). In psoriatic skin only expressed at very low levels. The p17/10 mature form is expressed in epidermis stratum corneum, the p20/p8 intermediate form in epidermis upper granular cells of the stratum granulosum.

The protein localises to the cytoplasm. The protein resides in the nucleus. With respect to regulation, inhibited by caspase-1 inhibitor YVAD-FMK and the pan-caspase inhibitor VAD-FMK. Non-apoptotic caspase involved in epidermal differentiation. Is the predominant caspase in epidermal stratum corneum. Seems to play a role in keratinocyte differentiation and is required for cornification. Regulates maturation of the epidermis by proteolytically processing filaggrin. In vitro has a preference for the substrate [WY]-X-X-D motif and is active on the synthetic caspase substrate WEHD-ACF. Involved in processing of prosaposin in the epidermis. May be involved in retinal pigment epithelium cell barrier function. Involved in DNA degradation in differentiated keratinocytes probably by cleaving DFFA/ICAD leading to liberation of DFFB/CAD. This is Caspase-14 (CASP14) from Homo sapiens (Human).